The sequence spans 371 residues: Putative RNA-binding protein Luc7-like 1 (371 aa).

Coiled coils occupy residues 87-177 and 220-256; these read MDHL…RNSM and QIRE…EERL. A compositionally biased stretch (basic and acidic residues) spans 232-257; sequence VAEKQEKRNQDRLRRREEREREERLG. The segment at 232 to 371 is disordered; sequence VAEKQEKRNQ…RSEEKEAGEI (140 aa). Basic residues predominate over residues 258-317; the sequence is RRSGSRTRDRRRSRSRDRRRRRSRSTSRERRKFSRSRSRDRYRRHRSRSRSHSRGHRRAS. Composition is skewed to basic and acidic residues over residues 318–351 and 361–371; these read RDRS…DWRL and RRSEEKEAGEI. Residues Ser-336 and Ser-363 each carry the phosphoserine modification.

The protein belongs to the Luc7 family.

In terms of biological role, may bind to RNA via its Arg/Ser-rich domain. This is Putative RNA-binding protein Luc7-like 1 (Luc7l) from Mus musculus (Mouse).